The sequence spans 455 residues: Ribulose bisphosphate carboxylase large chain (455 aa).

K5 is subject to N6,N6,N6-trimethyllysine. Positions 114 and 164 each coordinate substrate. K166 functions as the Proton acceptor in the catalytic mechanism. Residue K168 coordinates substrate. Residues K192, D194, and E195 each contribute to the Mg(2+) site. At K192 the chain carries N6-carboxylysine. Catalysis depends on H285, which acts as the Proton acceptor. Substrate is bound by residues R286, H318, and S370.

Belongs to the RuBisCO large chain family. Type I subfamily. In terms of assembly, heterohexadecamer of 8 large chains and 8 small chains; disulfide-linked. The disulfide link is formed within the large subunit homodimers. Mg(2+) serves as cofactor. Post-translationally, the disulfide bond which can form in the large chain dimeric partners within the hexadecamer appears to be associated with oxidative stress and protein turnover.

It is found in the plastid. Its subcellular location is the chloroplast. The enzyme catalyses 2 (2R)-3-phosphoglycerate + 2 H(+) = D-ribulose 1,5-bisphosphate + CO2 + H2O. It carries out the reaction D-ribulose 1,5-bisphosphate + O2 = 2-phosphoglycolate + (2R)-3-phosphoglycerate + 2 H(+). In terms of biological role, ruBisCO catalyzes two reactions: the carboxylation of D-ribulose 1,5-bisphosphate, the primary event in carbon dioxide fixation, as well as the oxidative fragmentation of the pentose substrate in the photorespiration process. Both reactions occur simultaneously and in competition at the same active site. The polypeptide is Ribulose bisphosphate carboxylase large chain (Lupinus microcarpus (Chick lupine)).